A 402-amino-acid polypeptide reads, in one-letter code: Large ribosomal subunit protein uL3 (402 aa).

The interval 1–35 (MSHRKFSAPRHGSMGFTPKKRSKRHRGKVKAFPKD) is disordered. Residues 18 to 31 (PKKRSKRHRGKVKA) show a composition bias toward basic residues.

This sequence belongs to the universal ribosomal protein uL3 family.

It localises to the cytoplasm. In terms of biological role, the L3 protein is a component of the large subunit of cytoplasmic ribosomes. The sequence is that of Large ribosomal subunit protein uL3 (RPL3) from Toxocara canis (Canine roundworm).